The sequence spans 100 residues: Small ribosomal subunit protein uS14m (100 aa).

It belongs to the universal ribosomal protein uS14 family.

The protein localises to the mitochondrion. The sequence is that of Small ribosomal subunit protein uS14m (RPS14) from Brassica napus (Rape).